The following is a 315-amino-acid chain: GTP cyclohydrolase MptA 1 (315 aa).

The protein belongs to the GTP cyclohydrolase IV family. In terms of assembly, homodimer. Requires Fe(2+) as cofactor.

The enzyme catalyses GTP + H2O = 7,8-dihydroneopterin 2',3'-cyclic phosphate + formate + diphosphate + H(+). It functions in the pathway cofactor biosynthesis; 5,6,7,8-tetrahydromethanopterin biosynthesis. In terms of biological role, converts GTP to 7,8-dihydro-D-neopterin 2',3'-cyclic phosphate, the first intermediate in the biosynthesis of coenzyme methanopterin. In Methanocella arvoryzae (strain DSM 22066 / NBRC 105507 / MRE50), this protein is GTP cyclohydrolase MptA 1.